A 629-amino-acid chain; its full sequence is 1-deoxy-D-xylulose-5-phosphate synthase (629 aa).

Thiamine diphosphate contacts are provided by residues histidine 72 and 113–115 (GHA). Position 144 (aspartate 144) interacts with Mg(2+). Thiamine diphosphate-binding positions include 145–146 (GA), asparagine 174, tyrosine 287, and glutamate 370. Mg(2+) is bound at residue asparagine 174.

The protein belongs to the transketolase family. DXPS subfamily. As to quaternary structure, homodimer. It depends on Mg(2+) as a cofactor. Thiamine diphosphate serves as cofactor.

The enzyme catalyses D-glyceraldehyde 3-phosphate + pyruvate + H(+) = 1-deoxy-D-xylulose 5-phosphate + CO2. Its pathway is metabolic intermediate biosynthesis; 1-deoxy-D-xylulose 5-phosphate biosynthesis; 1-deoxy-D-xylulose 5-phosphate from D-glyceraldehyde 3-phosphate and pyruvate: step 1/1. Functionally, catalyzes the acyloin condensation reaction between C atoms 2 and 3 of pyruvate and glyceraldehyde 3-phosphate to yield 1-deoxy-D-xylulose-5-phosphate (DXP). This is 1-deoxy-D-xylulose-5-phosphate synthase from Prochlorococcus marinus (strain AS9601).